A 607-amino-acid chain; its full sequence is Elongation factor 4 (607 aa).

Residues 11–193 form the tr-type G domain; that stretch reads KKIRNFSIIA…QIVELVPPPT (183 aa). Residues 23 to 28 and 140 to 143 each bind GTP; these read DHGKST and NKID.

Belongs to the TRAFAC class translation factor GTPase superfamily. Classic translation factor GTPase family. LepA subfamily.

It localises to the cell membrane. It carries out the reaction GTP + H2O = GDP + phosphate + H(+). Its function is as follows. Required for accurate and efficient protein synthesis under certain stress conditions. May act as a fidelity factor of the translation reaction, by catalyzing a one-codon backward translocation of tRNAs on improperly translocated ribosomes. Back-translocation proceeds from a post-translocation (POST) complex to a pre-translocation (PRE) complex, thus giving elongation factor G a second chance to translocate the tRNAs correctly. Binds to ribosomes in a GTP-dependent manner. This is Elongation factor 4 from Exiguobacterium sp. (strain ATCC BAA-1283 / AT1b).